Reading from the N-terminus, the 200-residue chain is UPF0329 protein ECU06_1670 (200 aa).

It belongs to the UPF0329 family.

The sequence is that of UPF0329 protein ECU06_1670 from Encephalitozoon cuniculi (strain GB-M1) (Microsporidian parasite).